Here is a 135-residue protein sequence, read N- to C-terminus: Histone H3 type 2 (135 aa).

Positions 1–40 (MARTKQTARKSTGGKAPRKQLATKAARKTPATGGVKKPHR) are disordered. At Lys5 the chain carries N6-methyllysine. Lys10 carries the N6-acetyllysine; alternate modification. At Lys10 the chain carries N6-methyllysine; alternate. A Phosphoserine modification is found at Ser11. Thr12 is subject to Phosphothreonine. N6-acetyllysine is present on residues Lys15, Lys19, and Lys24. Position 28 is an N6-acetyllysine; alternate (Lys28). Lys28 bears the N6-methyllysine; alternate mark. An N6-methyllysine mark is found at Lys36 and Lys37.

Belongs to the histone H3 family. The nucleosome is a histone octamer containing two molecules each of H2A, H2B, H3 and H4 assembled in one H3-H4 heterotetramer and two H2A-H2B heterodimers. The octamer wraps approximately 147 bp of DNA. Post-translationally, acetylation is generally linked to gene activation. Acetylated to form H3K9ac (11%), H3K14ac (17%), H3K18ac (11%), H3K23ac (16%) and H3K27ac (7%). H3K4, H3K35 and H3K36 are not acetylated. H3K4me prevents acetylation. 32% of the histone H3 are acetylated with, on average, 2.4 acetyl-Lys. They are all continuously deacatylated and re-acetylated with a half-life of approximately 2 minutes. Monomethylated to form H3K4me1 (81%), H3K9me1 (16%), H3K27me1 (25%), H3K35me1 (25%) and H3K36me1 (5%). No methylation at H3K14, H3K18 and H3K23. Methylated by a protein complex that includes Mut11. Set1 methylates specifically H3K4. H3K4me1 is associated with silenced euchromatin. Set3 forms H3K9me1, while H3K9me2 is undetected. H3K9me1 is specifically associated with silent, multi-copy transgenes. In terms of processing, no phosphorylation detected.

The protein resides in the nucleus. It localises to the chromosome. Its function is as follows. Core component of nucleosome. Nucleosomes wrap and compact DNA into chromatin, limiting DNA accessibility to the cellular machineries which require DNA as a template. Histones thereby play a central role in transcription regulation, DNA repair, DNA replication and chromosomal stability. DNA accessibility is regulated via a complex set of post-translational modifications of histones, also called histone code, and nucleosome remodeling. This chain is Histone H3 type 2 (ch3-II), found in Chlamydomonas reinhardtii (Chlamydomonas smithii).